The following is a 592-amino-acid chain: Cryptochrome-2 (592 aa).

One can recognise a Photolyase/cryptochrome alpha/beta domain in the interval 21–150; that stretch reads ASSVHWFRKG…EVVTENSHTL (130 aa). Residue Lys-29 forms a Glycyl lysine isopeptide (Lys-Gly) (interchain with G-Cter in ubiquitin) linkage. Ser-89 carries the post-translational modification Phosphoserine. Residues Lys-125 and Lys-241 each participate in a glycyl lysine isopeptide (Lys-Gly) (interchain with G-Cter in ubiquitin) cross-link. Ser-265 carries the post-translational modification Phosphoserine; by MAPK. Ser-270 serves as a coordination point for FAD. Phosphoserine is present on Ser-298. Residue Gln-307 coordinates FAD. Residue Lys-347 forms a Glycyl lysine isopeptide (Lys-Gly) (interchain with G-Cter in ubiquitin) linkage. Residues His-373 and 405-407 contribute to the FAD site; that span reads DAD. The required for inhibition of CLOCK-BMAL1-mediated transcription stretch occupies residues 389–488; the sequence is WVSWESGVRV…IIGVDYPRPI (100 aa). Glycyl lysine isopeptide (Lys-Gly) (interchain with G-Cter in ubiquitin) cross-links involve residues Lys-474 and Lys-503. Positions 532-592 are disordered; that stretch reads VAEPGSSQAG…PTQEPASKDS (61 aa). Polar residues predominate over residues 536-547; sequence GSSQAGSISNTG. Ser-553 bears the Phosphoserine; by GSK3-beta mark. At Ser-557 the chain carries Phosphoserine; by DYRK1A and MAPK. Residues 582 to 592 are compositionally biased toward polar residues; sequence MPTQEPASKDS.

Belongs to the DNA photolyase class-1 family. In terms of assembly, component of the circadian core oscillator, which includes the CRY proteins, CLOCK or NPAS2, BMAL1 or BMAL2, CSNK1D and/or CSNK1E, TIMELESS, and the PER proteins. Interacts with TIMELESS. Interacts directly with PER1, PER2 and PER3; interaction with PER2 inhibits its ubiquitination and vice versa. Interacts with CLOCK-BMAL1. Interacts with BMAL1. Interacts with CLOCK. Interacts with NFIL3. Interacts with FBXL3 and FBXL21. FBXL3, PER2 and the cofactor FAD compete for overlapping binding sites. FBXL3 cannot bind CRY2 that interacts already with PER2 or that contains bound FAD. Interacts with PPP5C (via TPR repeats); the interaction down-regulates the PPP5C phosphatase activity on CSNK1E. Interacts with nuclear receptors AR and NR3C1/GR; the interaction is ligand dependent. Interacts with PRKDC. Interacts with CIART. Interacts with DDB1, USP7 and TARDBP. Interacts with HNF4A. Interacts with PPARA. Interacts with PPARG in a ligand-dependent manner. Interacts with PPARD (via domain NR LBD) in a ligand-dependent manner. Interacts with NR1I2 (via domain NR LBD) in a ligand-dependent manner. Interacts with NR1I3 and VDR in a ligand-dependent manner. Requires FAD as cofactor. (6R)-5,10-methylene-5,6,7,8-tetrahydrofolate is required as a cofactor. Post-translationally, phosphorylation on Ser-265 by MAPK is important for the inhibition of CLOCK-BMAL1-mediated transcriptional activity. Phosphorylation by CSKNE requires interaction with PER1 or PER2. Phosphorylated in a circadian manner at Ser-553 and Ser-557 in the suprachiasmatic nucleus (SCN) and liver. Phosphorylation at Ser-557 by DYRK1A promotes subsequent phosphorylation at Ser-553 by GSK3-beta: the two-step phosphorylation at the neighboring Ser residues leads to its proteasomal degradation. In terms of processing, ubiquitinated by the SCF(FBXL3) and SCF(FBXL21) complexes, regulating the balance between degradation and stabilization. The SCF(FBXL3) complex is mainly nuclear and mediates ubiquitination and subsequent degradation of CRY2. In contrast, cytoplasmic SCF(FBXL21) complex-mediated ubiquitination leads to stabilize CRY2 and counteract the activity of the SCF(FBXL3) complex. The SCF(FBXL3) and SCF(FBXL21) complexes probably mediate ubiquitination at different Lys residues. The SCF(FBXL3) complex recognizes and binds CRY2 phosphorylated at Ser-553 and Ser-557. Ubiquitination may be inhibited by PER2. Deubiquitinated by USP7. As to expression, expression in the retina is restricted to the photoreceptor layer (at protein level). Expressed in all tissues examined including heart, brain, spleen, lung, liver, skeletal muscle, kidney and testis. Weak expression in spleen.

It localises to the cytoplasm. The protein resides in the nucleus. KL001 (N-[3-(9H-carbazol-9-yl)-2-hydroxypropyl]-N-(2-furanylmethyl)-methanesulfonamide) binds to CRY1 and stabilizes it by inhibiting FBXL3- and ubiquitin-dependent degradation of CRY1 resulting in lengthening of the circadian periods. KL001-mediated CRY1 stabilization can inhibit glucagon-induced gluconeogenesis in primary hepatocytes. In terms of biological role, transcriptional repressor which forms a core component of the circadian clock. The circadian clock, an internal time-keeping system, regulates various physiological processes through the generation of approximately 24 hour circadian rhythms in gene expression, which are translated into rhythms in metabolism and behavior. It is derived from the Latin roots 'circa' (about) and 'diem' (day) and acts as an important regulator of a wide array of physiological functions including metabolism, sleep, body temperature, blood pressure, endocrine, immune, cardiovascular, and renal function. Consists of two major components: the central clock, residing in the suprachiasmatic nucleus (SCN) of the brain, and the peripheral clocks that are present in nearly every tissue and organ system. Both the central and peripheral clocks can be reset by environmental cues, also known as Zeitgebers (German for 'timegivers'). The predominant Zeitgeber for the central clock is light, which is sensed by retina and signals directly to the SCN. The central clock entrains the peripheral clocks through neuronal and hormonal signals, body temperature and feeding-related cues, aligning all clocks with the external light/dark cycle. Circadian rhythms allow an organism to achieve temporal homeostasis with its environment at the molecular level by regulating gene expression to create a peak of protein expression once every 24 hours to control when a particular physiological process is most active with respect to the solar day. Transcription and translation of core clock components (CLOCK, NPAS2, BMAL1, BMAL2, PER1, PER2, PER3, CRY1 and CRY2) plays a critical role in rhythm generation, whereas delays imposed by post-translational modifications (PTMs) are important for determining the period (tau) of the rhythms (tau refers to the period of a rhythm and is the length, in time, of one complete cycle). A diurnal rhythm is synchronized with the day/night cycle, while the ultradian and infradian rhythms have a period shorter and longer than 24 hours, respectively. Disruptions in the circadian rhythms contribute to the pathology of cardiovascular diseases, cancer, metabolic syndromes and aging. A transcription/translation feedback loop (TTFL) forms the core of the molecular circadian clock mechanism. Transcription factors, CLOCK or NPAS2 and BMAL1 or BMAL2, form the positive limb of the feedback loop, act in the form of a heterodimer and activate the transcription of core clock genes and clock-controlled genes (involved in key metabolic processes), harboring E-box elements (5'-CACGTG-3') within their promoters. The core clock genes: PER1/2/3 and CRY1/2 which are transcriptional repressors form the negative limb of the feedback loop and interact with the CLOCK|NPAS2-BMAL1|BMAL2 heterodimer inhibiting its activity and thereby negatively regulating their own expression. This heterodimer also activates nuclear receptors NR1D1/2 and RORA/B/G, which form a second feedback loop and which activate and repress BMAL1 transcription, respectively. CRY1 and CRY2 have redundant functions but also differential and selective contributions at least in defining the pace of the SCN circadian clock and its circadian transcriptional outputs. Less potent transcriptional repressor in cerebellum and liver than CRY1, though less effective in lengthening the period of the SCN oscillator. Seems to play a critical role in tuning SCN circadian period by opposing the action of CRY1. With CRY1, dispensable for circadian rhythm generation but necessary for the development of intercellular networks for rhythm synchrony. May mediate circadian regulation of cAMP signaling and gluconeogenesis by blocking glucagon-mediated increases in intracellular cAMP concentrations and in CREB1 phosphorylation. Besides its role in the maintenance of the circadian clock, is also involved in the regulation of other processes. Plays a key role in glucose and lipid metabolism modulation, in part, through the transcriptional regulation of genes involved in these pathways, such as LEP or ACSL4. Represses glucocorticoid receptor NR3C1/GR-induced transcriptional activity by binding to glucocorticoid response elements (GREs). Represses the CLOCK-BMAL1 induced transcription of BHLHE40/DEC1 and NAMPT. Represses PPARD and its target genes in the skeletal muscle and limits exercise capacity. Represses the transcriptional activity of NR1I2. In Mus musculus (Mouse), this protein is Cryptochrome-2 (Cry2).